The chain runs to 221 residues: Enolase-phosphatase E1 (221 aa).

The protein belongs to the HAD-like hydrolase superfamily. MasA/MtnC family. Monomer. Mg(2+) is required as a cofactor.

The enzyme catalyses 5-methylsulfanyl-2,3-dioxopentyl phosphate + H2O = 1,2-dihydroxy-5-(methylsulfanyl)pent-1-en-3-one + phosphate. It functions in the pathway amino-acid biosynthesis; L-methionine biosynthesis via salvage pathway; L-methionine from S-methyl-5-thio-alpha-D-ribose 1-phosphate: step 3/6. Its pathway is amino-acid biosynthesis; L-methionine biosynthesis via salvage pathway; L-methionine from S-methyl-5-thio-alpha-D-ribose 1-phosphate: step 4/6. Its function is as follows. Bifunctional enzyme that catalyzes the enolization of 2,3-diketo-5-methylthiopentyl-1-phosphate (DK-MTP-1-P) into the intermediate 2-hydroxy-3-keto-5-methylthiopentenyl-1-phosphate (HK-MTPenyl-1-P), which is then dephosphorylated to form the acireductone 1,2-dihydroxy-3-keto-5-methylthiopentene (DHK-MTPene). The chain is Enolase-phosphatase E1 from Xanthobacter autotrophicus (strain ATCC BAA-1158 / Py2).